The primary structure comprises 330 residues: Ketol-acid reductoisomerase (NADP(+)) (330 aa).

One can recognise a KARI N-terminal Rossmann domain in the interval 2-182 (VEIYYDDDAS…GGTRAGALRT (181 aa)). Residues 25–28 (YGSQ), serine 51, and serine 53 each bind NADP(+). The active site involves histidine 108. Glycine 134 serves as a coordination point for NADP(+). In terms of domain architecture, KARI C-terminal knotted spans 183–328 (TFTEETETDL…AKLRPLMSWI (146 aa)). 4 residues coordinate Mg(2+): aspartate 191, glutamate 195, glutamate 227, and glutamate 231. Residue serine 252 coordinates substrate.

The protein belongs to the ketol-acid reductoisomerase family. Mg(2+) serves as cofactor.

The catalysed reaction is (2R)-2,3-dihydroxy-3-methylbutanoate + NADP(+) = (2S)-2-acetolactate + NADPH + H(+). It carries out the reaction (2R,3R)-2,3-dihydroxy-3-methylpentanoate + NADP(+) = (S)-2-ethyl-2-hydroxy-3-oxobutanoate + NADPH + H(+). It functions in the pathway amino-acid biosynthesis; L-isoleucine biosynthesis; L-isoleucine from 2-oxobutanoate: step 2/4. The protein operates within amino-acid biosynthesis; L-valine biosynthesis; L-valine from pyruvate: step 2/4. In terms of biological role, involved in the biosynthesis of branched-chain amino acids (BCAA). Catalyzes an alkyl-migration followed by a ketol-acid reduction of (S)-2-acetolactate (S2AL) to yield (R)-2,3-dihydroxy-isovalerate. In the isomerase reaction, S2AL is rearranged via a Mg-dependent methyl migration to produce 3-hydroxy-3-methyl-2-ketobutyrate (HMKB). In the reductase reaction, this 2-ketoacid undergoes a metal-dependent reduction by NADPH to yield (R)-2,3-dihydroxy-isovalerate. This is Ketol-acid reductoisomerase (NADP(+)) from Frankia alni (strain DSM 45986 / CECT 9034 / ACN14a).